A 238-amino-acid polypeptide reads, in one-letter code: 1-(5-phosphoribosyl)-5-[(5-phosphoribosylamino)methylideneamino] imidazole-4-carboxamide isomerase (238 aa).

Asp8 functions as the Proton acceptor in the catalytic mechanism. The active-site Proton donor is the Asp130.

The protein belongs to the HisA/HisF family.

It is found in the cytoplasm. It catalyses the reaction 1-(5-phospho-beta-D-ribosyl)-5-[(5-phospho-beta-D-ribosylamino)methylideneamino]imidazole-4-carboxamide = 5-[(5-phospho-1-deoxy-D-ribulos-1-ylimino)methylamino]-1-(5-phospho-beta-D-ribosyl)imidazole-4-carboxamide. It participates in amino-acid biosynthesis; L-histidine biosynthesis; L-histidine from 5-phospho-alpha-D-ribose 1-diphosphate: step 4/9. This Methanococcus maripaludis (strain C6 / ATCC BAA-1332) protein is 1-(5-phosphoribosyl)-5-[(5-phosphoribosylamino)methylideneamino] imidazole-4-carboxamide isomerase.